We begin with the raw amino-acid sequence, 173 residues long: Crossover junction endodeoxyribonuclease RuvC (173 aa).

Catalysis depends on residues D8, E67, and D139. Residues D8, E67, and D139 each coordinate Mg(2+).

It belongs to the RuvC family. As to quaternary structure, homodimer which binds Holliday junction (HJ) DNA. The HJ becomes 2-fold symmetrical on binding to RuvC with unstacked arms; it has a different conformation from HJ DNA in complex with RuvA. In the full resolvosome a probable DNA-RuvA(4)-RuvB(12)-RuvC(2) complex forms which resolves the HJ. Requires Mg(2+) as cofactor.

It is found in the cytoplasm. It carries out the reaction Endonucleolytic cleavage at a junction such as a reciprocal single-stranded crossover between two homologous DNA duplexes (Holliday junction).. In terms of biological role, the RuvA-RuvB-RuvC complex processes Holliday junction (HJ) DNA during genetic recombination and DNA repair. Endonuclease that resolves HJ intermediates. Cleaves cruciform DNA by making single-stranded nicks across the HJ at symmetrical positions within the homologous arms, yielding a 5'-phosphate and a 3'-hydroxyl group; requires a central core of homology in the junction. The consensus cleavage sequence is 5'-(A/T)TT(C/G)-3'. Cleavage occurs on the 3'-side of the TT dinucleotide at the point of strand exchange. HJ branch migration catalyzed by RuvA-RuvB allows RuvC to scan DNA until it finds its consensus sequence, where it cleaves and resolves the cruciform DNA. This chain is Crossover junction endodeoxyribonuclease RuvC, found in Enterobacter sp. (strain 638).